Consider the following 269-residue polypeptide: 3-methyl-2-oxobutanoate hydroxymethyltransferase (269 aa).

Asp-48 and Asp-87 together coordinate Mg(2+). Residues 48–49 (DS), Asp-87, and Lys-116 each bind 3-methyl-2-oxobutanoate. Glu-118 provides a ligand contact to Mg(2+). Glu-185 acts as the Proton acceptor in catalysis.

It belongs to the PanB family. In terms of assembly, homodecamer; pentamer of dimers. Requires Mg(2+) as cofactor.

Its subcellular location is the cytoplasm. The enzyme catalyses 3-methyl-2-oxobutanoate + (6R)-5,10-methylene-5,6,7,8-tetrahydrofolate + H2O = 2-dehydropantoate + (6S)-5,6,7,8-tetrahydrofolate. It participates in cofactor biosynthesis; (R)-pantothenate biosynthesis; (R)-pantoate from 3-methyl-2-oxobutanoate: step 1/2. Catalyzes the reversible reaction in which hydroxymethyl group from 5,10-methylenetetrahydrofolate is transferred onto alpha-ketoisovalerate to form ketopantoate. The chain is 3-methyl-2-oxobutanoate hydroxymethyltransferase from Campylobacter curvus (strain 525.92).